The sequence spans 344 residues: Probable dual-specificity RNA methyltransferase RlmN (344 aa).

The Proton acceptor role is filled by E90. One can recognise a Radical SAM core domain in the interval 96–326 (YKYGNAICIS…VTIRRELGSS (231 aa)). A disulfide bond links C103 and C331. The [4Fe-4S] cluster site is built by C110, C114, and C117. S-adenosyl-L-methionine contacts are provided by residues 157–158 (GE), S189, 212–214 (SLH), and N288. The S-methylcysteine intermediate role is filled by C331.

It belongs to the radical SAM superfamily. RlmN family. [4Fe-4S] cluster is required as a cofactor.

It is found in the cytoplasm. The enzyme catalyses adenosine(2503) in 23S rRNA + 2 reduced [2Fe-2S]-[ferredoxin] + 2 S-adenosyl-L-methionine = 2-methyladenosine(2503) in 23S rRNA + 5'-deoxyadenosine + L-methionine + 2 oxidized [2Fe-2S]-[ferredoxin] + S-adenosyl-L-homocysteine. It catalyses the reaction adenosine(37) in tRNA + 2 reduced [2Fe-2S]-[ferredoxin] + 2 S-adenosyl-L-methionine = 2-methyladenosine(37) in tRNA + 5'-deoxyadenosine + L-methionine + 2 oxidized [2Fe-2S]-[ferredoxin] + S-adenosyl-L-homocysteine. Its function is as follows. Specifically methylates position 2 of adenine 2503 in 23S rRNA and position 2 of adenine 37 in tRNAs. This is Probable dual-specificity RNA methyltransferase RlmN from Caldicellulosiruptor saccharolyticus (strain ATCC 43494 / DSM 8903 / Tp8T 6331).